We begin with the raw amino-acid sequence, 217 residues long: MANQEIFDKLRDAIVNQNVAGTPELCKEALAAGVPALDIITKGLSVGMKIVGDKFEAAEIFLPQIMMSGKAMSNAMEVLTPELEKNKKEGEEAGLAITFVAEGDIHDIGHRLVTTMLGANGFQIVDLGVDVLNENVVEEAAKHKGEKVLLVGSALMTTSMLGQKDLMDRLNEEKLRDSVKCMFGGAPVSDKWIEEIGADATAENAAEAAKVALEVMK.

A B12-binding N-terminal domain is found at 1–91; sequence MANQEIFDKL…ELEKNKKEGE (91 aa). Residues 93–217 enclose the B12-binding domain; the sequence is AGLAITFVAE…AAKVALEVMK (125 aa). Histidine 106 serves as a coordination point for methylcob(III)alamin.

In terms of assembly, can form a complex with MtmB.

It functions in the pathway one-carbon metabolism; methanogenesis from methylamine. Acts as a methyl group carrier between MtmB and MtbA. The sequence is that of Monomethylamine corrinoid protein 1 (mtmC1) from Methanosarcina barkeri.